A 556-amino-acid chain; its full sequence is Formate--tetrahydrofolate ligase (556 aa).

An ATP-binding site is contributed by 65 to 72 (TPAGEGKT).

This sequence belongs to the formate--tetrahydrofolate ligase family.

The catalysed reaction is (6S)-5,6,7,8-tetrahydrofolate + formate + ATP = (6R)-10-formyltetrahydrofolate + ADP + phosphate. Its pathway is one-carbon metabolism; tetrahydrofolate interconversion. The sequence is that of Formate--tetrahydrofolate ligase from Acetivibrio thermocellus (strain ATCC 27405 / DSM 1237 / JCM 9322 / NBRC 103400 / NCIMB 10682 / NRRL B-4536 / VPI 7372) (Clostridium thermocellum).